We begin with the raw amino-acid sequence, 89 residues long: Elongation factor 1-beta (89 aa).

This sequence belongs to the EF-1-beta/EF-1-delta family.

Promotes the exchange of GDP for GTP in EF-1-alpha/GDP, thus allowing the regeneration of EF-1-alpha/GTP that could then be used to form the ternary complex EF-1-alpha/GTP/AAtRNA. The chain is Elongation factor 1-beta from Methanococcus maripaludis (strain C5 / ATCC BAA-1333).